A 132-amino-acid chain; its full sequence is MVMTDPIADMLTRIRNANMVRHEKMELPASNIKREIAEILKREGFIRDVEYIEDAKQGTLRLFLKYGASNERVITGLKRISKPGLRVYAKADEVPKVLGGLGIAVLSTSKGLMTDKEARQQQVGGEVIAYIW.

The protein belongs to the universal ribosomal protein uS8 family. Part of the 30S ribosomal subunit. Contacts proteins S5 and S12.

One of the primary rRNA binding proteins, it binds directly to 16S rRNA central domain where it helps coordinate assembly of the platform of the 30S subunit. The polypeptide is Small ribosomal subunit protein uS8 (Exiguobacterium sp. (strain ATCC BAA-1283 / AT1b)).